Reading from the N-terminus, the 408-residue chain is Solute carrier family 35 member F1 (408 aa).

Residues 1–21 (MIPPEQPQQQLQPPSPAPPNH) form a disordered region. The next 10 membrane-spanning stretches (helical) occupy residues 60–80 (MLIS…IGLT), 94–114 (VFQS…TLAV), 129–147 (WWKY…YLVV), 158–178 (IQLL…FFLL), 186–206 (FIGI…DVLV), 221–241 (LLVL…EYII), 247–267 (VEFL…QLAI), 284–304 (LLYV…PVVI), 311–331 (SVNL…LFLF), and 335–355 (FSGL…LYSS).

It belongs to the SLC35F solute transporter family.

The protein resides in the cytoplasmic vesicle. The protein localises to the secretory vesicle. It localises to the synaptic vesicle membrane. Its function is as follows. Putative solute transporter. In Homo sapiens (Human), this protein is Solute carrier family 35 member F1 (SLC35F1).